The sequence spans 443 residues: Proline--tRNA ligase (443 aa).

This sequence belongs to the class-II aminoacyl-tRNA synthetase family. ProS type 2 subfamily. In terms of assembly, homodimer.

The protein resides in the cytoplasm. It carries out the reaction tRNA(Pro) + L-proline + ATP = L-prolyl-tRNA(Pro) + AMP + diphosphate. Its function is as follows. Catalyzes the attachment of proline to tRNA(Pro) in a two-step reaction: proline is first activated by ATP to form Pro-AMP and then transferred to the acceptor end of tRNA(Pro). The polypeptide is Proline--tRNA ligase (Caulobacter vibrioides (strain ATCC 19089 / CIP 103742 / CB 15) (Caulobacter crescentus)).